The sequence spans 407 residues: Peptide chain release factor subunit 1 (407 aa).

It belongs to the eukaryotic release factor 1 family. In terms of assembly, heterodimer of two subunits, one of which binds GTP.

It is found in the cytoplasm. In terms of biological role, directs the termination of nascent peptide synthesis (translation) in response to the termination codons UAA, UAG and UGA. The sequence is that of Peptide chain release factor subunit 1 (prf1) from Archaeoglobus fulgidus (strain ATCC 49558 / DSM 4304 / JCM 9628 / NBRC 100126 / VC-16).